A 200-amino-acid chain; its full sequence is ATP-dependent Clp protease proteolytic subunit (200 aa).

The Nucleophile role is filled by Ser-99. His-124 is a catalytic residue.

This sequence belongs to the peptidase S14 family. Fourteen ClpP subunits assemble into 2 heptameric rings which stack back to back to give a disk-like structure with a central cavity, resembling the structure of eukaryotic proteasomes.

Its subcellular location is the cytoplasm. The enzyme catalyses Hydrolysis of proteins to small peptides in the presence of ATP and magnesium. alpha-casein is the usual test substrate. In the absence of ATP, only oligopeptides shorter than five residues are hydrolyzed (such as succinyl-Leu-Tyr-|-NHMec, and Leu-Tyr-Leu-|-Tyr-Trp, in which cleavage of the -Tyr-|-Leu- and -Tyr-|-Trp bonds also occurs).. In terms of biological role, cleaves peptides in various proteins in a process that requires ATP hydrolysis. Has a chymotrypsin-like activity. Plays a major role in the degradation of misfolded proteins. The sequence is that of ATP-dependent Clp protease proteolytic subunit from Syntrophomonas wolfei subsp. wolfei (strain DSM 2245B / Goettingen).